A 261-amino-acid chain; its full sequence is Serine/arginine-rich splicing factor 12 (261 aa).

The 79-residue stretch at 10–88 (TSLFIRNVAD…RQIEIQFAQG (79 aa)) folds into the RRM domain. Residues 86 to 261 (AQGDRKTPGQ…SRSYRHKNSW (176 aa)) form a disordered region. Residues 88 to 109 (GDRKTPGQMKSKERHPCSPSDH) show a composition bias toward basic and acidic residues. Basic residues-rich tracts occupy residues 110–122 (RRSRSPSQRRTRS) and 178–191 (GRSRSKSLQKRSKS). Low complexity predominate over residues 192 to 209 (IGKSQSSSPQKQTSSGTK). Polar residues predominate over residues 230-239 (GYTNSETKVQ). The span at 240–261 (TAKHSHFRSHSRSRSYRHKNSW) shows a compositional bias: basic residues.

The protein belongs to the splicing factor SR family. In terms of tissue distribution, expressed in testis.

Its subcellular location is the nucleus. Its function is as follows. Splicing factor that seems to antagonize SR proteins in pre-mRNA splicing regulation. The chain is Serine/arginine-rich splicing factor 12 (SRSF12) from Homo sapiens (Human).